The primary structure comprises 521 residues: Glutamyl-tRNA(Gln) amidotransferase subunit A (521 aa).

Residues K79 and S187 each act as charge relay system in the active site. S211 serves as the catalytic Acyl-ester intermediate.

This sequence belongs to the amidase family. GatA subfamily. As to quaternary structure, heterotrimer of A, B and C subunits.

It carries out the reaction L-glutamyl-tRNA(Gln) + L-glutamine + ATP + H2O = L-glutaminyl-tRNA(Gln) + L-glutamate + ADP + phosphate + H(+). Its function is as follows. Allows the formation of correctly charged Gln-tRNA(Gln) through the transamidation of misacylated Glu-tRNA(Gln) in organisms which lack glutaminyl-tRNA synthetase. The reaction takes place in the presence of glutamine and ATP through an activated gamma-phospho-Glu-tRNA(Gln). The polypeptide is Glutamyl-tRNA(Gln) amidotransferase subunit A (Mesorhizobium japonicum (strain LMG 29417 / CECT 9101 / MAFF 303099) (Mesorhizobium loti (strain MAFF 303099))).